A 147-amino-acid polypeptide reads, in one-letter code: MNWTTATCWALLLATAFLCDSCSAKGGRGGARGSARGVRGGARGASRVRVRPAPRYSSSLRVAAAGAAAGAAAGVAAGLATGSGWRRTSGPGELGLEDDENGAMGGNGTDRGVYSYWAWTSGSGSVHSPRICLLLSGTLGALELLRP.

The signal sequence occupies residues 1 to 24 (MNWTTATCWALLLATAFLCDSCSA). The segment covering 26–43 (GGRGGARGSARGVRGGAR) has biased composition (gly residues). A disordered region spans residues 26–46 (GGRGGARGSARGVRGGARGAS). Asn-107 carries N-linked (GlcNAc...) asparagine glycosylation. Gly-122 carries GPI-anchor amidated glycine lipidation. The propeptide at 123–147 (SGSVHSPRICLLLSGTLGALELLRP) is removed in mature form.

Belongs to the SPRN family. Post-translationally, N-glycosylated. As to expression, almost exclusively expressed in brain, with weak expression in lung and stomach.

Its subcellular location is the cell membrane. Functionally, prion-like protein that has PrP(C)-like neuroprotective activity. May act as a modulator for the biological actions of normal and abnormal PrP. The chain is Shadow of prion protein (Sprn) from Rattus norvegicus (Rat).